A 133-amino-acid polypeptide reads, in one-letter code: MTTWILDKSAHVRLVAGATPPAGIDLTDLAICDIGELEWLYSARSATDYDSQQTSLRAYQILRAPSDIFDRVRHLQRDLAHHRGMWHRTPLPDLFIAETALHHRAGVLHHDRDYKRIAVVRPGFQACELSRGR.

2 residues coordinate Mg(2+): aspartate 7 and aspartate 93. The region spanning 30–118 (AICDIGELEW…HHDRDYKRIA (89 aa)) is the PINc domain.

It belongs to the PINc/VapC protein family. Mg(2+) is required as a cofactor.

Functionally, toxic component of a type II toxin-antitoxin (TA) system. An RNase. The cognate antitoxin is VapB17. The polypeptide is Ribonuclease VapC17 (Mycobacterium tuberculosis (strain CDC 1551 / Oshkosh)).